A 103-amino-acid polypeptide reads, in one-letter code: Small ribosomal subunit protein uS10 (103 aa).

It belongs to the universal ribosomal protein uS10 family. As to quaternary structure, part of the 30S ribosomal subunit.

Functionally, involved in the binding of tRNA to the ribosomes. The protein is Small ribosomal subunit protein uS10 of Fusobacterium nucleatum subsp. nucleatum (strain ATCC 25586 / DSM 15643 / BCRC 10681 / CIP 101130 / JCM 8532 / KCTC 2640 / LMG 13131 / VPI 4355).